The chain runs to 209 residues: Thiamine-phosphate synthase 1 (209 aa).

4-amino-2-methyl-5-(diphosphooxymethyl)pyrimidine is bound by residues 39-43 (QFREK) and Asn74. Mg(2+)-binding residues include Asp75 and Asp94. Residue Ser112 coordinates 4-amino-2-methyl-5-(diphosphooxymethyl)pyrimidine. 138–140 (TQS) lines the 2-[(2R,5Z)-2-carboxy-4-methylthiazol-5(2H)-ylidene]ethyl phosphate pocket. 4-amino-2-methyl-5-(diphosphooxymethyl)pyrimidine is bound at residue Lys141. 2-[(2R,5Z)-2-carboxy-4-methylthiazol-5(2H)-ylidene]ethyl phosphate contacts are provided by residues Gly170 and 190-191 (IS).

Belongs to the thiamine-phosphate synthase family. The cofactor is Mg(2+).

It catalyses the reaction 2-[(2R,5Z)-2-carboxy-4-methylthiazol-5(2H)-ylidene]ethyl phosphate + 4-amino-2-methyl-5-(diphosphooxymethyl)pyrimidine + 2 H(+) = thiamine phosphate + CO2 + diphosphate. It carries out the reaction 2-(2-carboxy-4-methylthiazol-5-yl)ethyl phosphate + 4-amino-2-methyl-5-(diphosphooxymethyl)pyrimidine + 2 H(+) = thiamine phosphate + CO2 + diphosphate. The enzyme catalyses 4-methyl-5-(2-phosphooxyethyl)-thiazole + 4-amino-2-methyl-5-(diphosphooxymethyl)pyrimidine + H(+) = thiamine phosphate + diphosphate. Its pathway is cofactor biosynthesis; thiamine diphosphate biosynthesis; thiamine phosphate from 4-amino-2-methyl-5-diphosphomethylpyrimidine and 4-methyl-5-(2-phosphoethyl)-thiazole: step 1/1. In terms of biological role, condenses 4-methyl-5-(beta-hydroxyethyl)thiazole monophosphate (THZ-P) and 2-methyl-4-amino-5-hydroxymethyl pyrimidine pyrophosphate (HMP-PP) to form thiamine monophosphate (TMP). The sequence is that of Thiamine-phosphate synthase 1 from Streptococcus pneumoniae serotype 4 (strain ATCC BAA-334 / TIGR4).